Reading from the N-terminus, the 132-residue chain is D-ribose pyranase (132 aa).

The active-site Proton donor is His-20. Residues Asp-28, His-99, and 121-123 contribute to the substrate site; that span reads YSN.

The protein belongs to the RbsD / FucU family. RbsD subfamily. As to quaternary structure, homodecamer.

The protein localises to the cytoplasm. It carries out the reaction beta-D-ribopyranose = beta-D-ribofuranose. It functions in the pathway carbohydrate metabolism; D-ribose degradation; D-ribose 5-phosphate from beta-D-ribopyranose: step 1/2. Catalyzes the interconversion of beta-pyran and beta-furan forms of D-ribose. In Pseudomonas putida (strain GB-1), this protein is D-ribose pyranase.